The chain runs to 236 residues: Apoptosis regulator Bcl-2 (236 aa).

A BH4 motif is present at residues 10–30 (DNREIVMKYIHYKLSQRGYEW). At Thr-69 the chain carries Phosphothreonine; by MAPK8. Ser-70 carries the post-translational modification Phosphoserine; by MAPK8 and PKC. At Ser-84 the chain carries Phosphoserine; by MAPK8. Residues 90–104 (VHLTLRRAGDDFSRR) carry the BH3 motif. Positions 133 to 152 (ELFRDGVNWGRIVAFFEFGG) match the BH1 motif. Residues 184–199 (TWIQDNGGWDAFVELY) carry the BH2 motif. The chain crosses the membrane as a helical span at residues 209-230 (FSWLSLKTLLSLALVGACITLG).

Belongs to the Bcl-2 family. As to quaternary structure, forms homodimers, and heterodimers with BAX, BAD, BAK and Bcl-X(L). Heterodimerization with BAX requires intact BH1 and BH2 motifs, and is necessary for anti-apoptotic activity. Component of the complex, at least composed of LRPPRC, BECN1 and BCL2; the interactions prevent BECN1 from forming an autophagy-inducing complex with PIK3C3. Interacts with EI24. Also interacts with APAF1, BBC3, BCL2L1, BNIPL, MRPL41 and TP53BP2. Binding to FKBP8 seems to target BCL2 to the mitochondria and probably interferes with the binding of BCL2 to its targets. Interacts with BAG1 in an ATP-dependent manner. Interacts with RAF1 (the 'Ser-338' and 'Ser-339' phosphorylated form). Interacts (via the BH4 domain) with EGLN3; the interaction prevents the formation of the BAX-BCL2 complex and inhibits the anti-apoptotic activity of BCL2. Interacts with G0S2; this interaction also prevents the formation of the anti-apoptotic BAX-BCL2 complex. Interacts with RTL10/BOP. Interacts with the SCF(FBXO10) complex. Interacts (via the loop between motifs BH4 and BH3) with NLRP1 (via LRR repeats), but not with NLRP2, NLRP3, NLRP4, PYCARD, nor MEFV. Interacts with GIMAP3/IAN4, GIMAP4/IAN1 and GIMAP5/IAN5. Interacts with BCAP31. Interacts with IRF3; the interaction is inhibited by Sendai virus infection. Interacts with BECN1; thereby inhibiting autophagy in non-starvation conditions. Interacts with AMBRA1; thereby inhibiting autophagy. Post-translationally, phosphorylation/dephosphorylation on Ser-70 regulates anti-apoptotic activity. Growth factor-stimulated phosphorylation on Ser-70 by PKC is required for the anti-apoptosis activity and occurs during the G2/M phase of the cell cycle. In the absence of growth factors, BCL2 appears to be phosphorylated by other protein kinases such as ERKs and stress-activated kinases. Phosphorylated by MAPK8/JNK1 at Thr-69, Ser-70 and Ser-84, which stimulates starvation-induced autophagy. Dephosphorylated by protein phosphatase 2A (PP2A). Proteolytically cleaved by caspases during apoptosis. The cleaved protein, lacking the BH4 motif, has pro-apoptotic activity, causes the release of cytochrome c into the cytosol promoting further caspase activity. In terms of processing, monoubiquitinated by PRKN, leading to an increase in its stability. Ubiquitinated by SCF(FBXO10), leading to its degradation by the proteasome.

Its subcellular location is the mitochondrion outer membrane. The protein localises to the nucleus membrane. The protein resides in the endoplasmic reticulum membrane. It localises to the cytoplasm. Its function is as follows. Suppresses apoptosis in a variety of cell systems including factor-dependent lymphohematopoietic and neural cells. Regulates cell death by controlling the mitochondrial membrane permeability. Appears to function in a feedback loop system with caspases. Inhibits caspase activity either by preventing the release of cytochrome c from the mitochondria and/or by binding to the apoptosis-activating factor (APAF-1). Also acts as an inhibitor of autophagy: interacts with BECN1 and AMBRA1 during non-starvation conditions and inhibits their autophagy function. May attenuate inflammation by impairing NLRP1-inflammasome activation, hence CASP1 activation and IL1B release. The sequence is that of Apoptosis regulator Bcl-2 (BCL2) from Cricetulus griseus (Chinese hamster).